Reading from the N-terminus, the 407-residue chain is Argininosuccinate synthase (407 aa).

ATP is bound by residues 11-19 (AYSGGLDTS) and Ala39. Positions 90 and 95 each coordinate L-citrulline. An ATP-binding site is contributed by Gly120. L-aspartate contacts are provided by Thr122, Asn126, and Asp127. L-citrulline is bound at residue Asn126. Residues Arg130, Ser179, Ser188, Glu264, and Tyr276 each coordinate L-citrulline.

This sequence belongs to the argininosuccinate synthase family. Type 1 subfamily. In terms of assembly, homotetramer.

It localises to the cytoplasm. It carries out the reaction L-citrulline + L-aspartate + ATP = 2-(N(omega)-L-arginino)succinate + AMP + diphosphate + H(+). It functions in the pathway amino-acid biosynthesis; L-arginine biosynthesis; L-arginine from L-ornithine and carbamoyl phosphate: step 2/3. In Roseiflexus sp. (strain RS-1), this protein is Argininosuccinate synthase.